The primary structure comprises 316 residues: MLKRLANRQNGFASFSCSSVGLRYGRTNPSTKRSFSLFQSVADTFLTVHEASHIPWIVLVPLTTMTLRTLVTLPFSIWQRRRILKQQELRKLVQPITPIIKLRLAAVTNKKSRNAARISSNGSFMPLQLQNAGVLTPEQITLLAVKETRKRQKKLFKKYNVPLWKNALLPMVQIPLWVTVSMGIRTLTETQLIESFYPSWFSALGFSSFDLSSPLVAMPLLAPILVGTLAVLNVELNGRLMFSSSLSSQGIKTISRNSTRVQEAMTSILNVSRLGCVVMLAMSSQAPFLLSLYWISSQLFSLVQNIILNWIYPYQR.

The chain crosses the membrane as a helical span at residues 164–184 (WKNALLPMVQIPLWVTVSMGI). At 185–213 (RTLTETQLIESFYPSWFSALGFSSFDLSS) the chain is on the mitochondrial matrix side. The helical transmembrane segment at 214–234 (PLVAMPLLAPILVGTLAVLNV) threads the bilayer. Topologically, residues 235 to 274 (ELNGRLMFSSSLSSQGIKTISRNSTRVQEAMTSILNVSRL) are mitochondrial intermembrane. A helical membrane pass occupies residues 275–295 (GCVVMLAMSSQAPFLLSLYWI). Topologically, residues 296–316 (SSQLFSLVQNIILNWIYPYQR) are mitochondrial matrix.

This sequence belongs to the OXA1/ALB3/YidC family. In terms of assembly, interacts with PNT1 and MSS2.

It is found in the mitochondrion inner membrane. Required for the insertion of integral membrane proteins into the mitochondrial inner membrane. Essential for the activity and assembly of cytochrome c oxidase. Plays a central role in the translocation and export of the C-terminal part of the COX2 protein into the mitochondrial intermembrane space. This Saccharomyces cerevisiae (strain ATCC 204508 / S288c) (Baker's yeast) protein is Cytochrome c oxidase assembly protein COX18, mitochondrial (COX18).